Consider the following 457-residue polypeptide: Phosphoglucosamine mutase (457 aa).

S105 (phosphoserine intermediate) is an active-site residue. Positions 105, 247, 249, and 251 each coordinate Mg(2+). Position 105 is a phosphoserine (S105).

This sequence belongs to the phosphohexose mutase family. Mg(2+) serves as cofactor. Post-translationally, activated by phosphorylation.

The catalysed reaction is alpha-D-glucosamine 1-phosphate = D-glucosamine 6-phosphate. Functionally, catalyzes the conversion of glucosamine-6-phosphate to glucosamine-1-phosphate. The chain is Phosphoglucosamine mutase from Protochlamydia amoebophila (strain UWE25).